Consider the following 409-residue polypeptide: Translation initiation factor 2 subunit gamma (409 aa).

One can recognise a tr-type G domain in the interval 6-203 (QPEVNIGLVG…AVQSEIPTPE (198 aa)). The interval 15–22 (GHVDHGKT) is G1. Asp18, Thr22, Gly43, and Ser45 together coordinate Mg(2+). 18–23 (DHGKTT) provides a ligand contact to GTP. The segment at 43 to 47 (GISIR) is G2. Residues 90–93 (DAPG) are G3. Residues 146–149 (NKVD) and 181–183 (SAG) contribute to the GTP site. The tract at residues 146 to 149 (NKVD) is G4. Positions 181 to 183 (SAG) are G5.

Belongs to the TRAFAC class translation factor GTPase superfamily. Classic translation factor GTPase family. EIF2G subfamily. As to quaternary structure, heterotrimer composed of an alpha, a beta and a gamma chain. Mg(2+) serves as cofactor.

It carries out the reaction GTP + H2O = GDP + phosphate + H(+). EIF-2 functions in the early steps of protein synthesis by forming a ternary complex with GTP and initiator tRNA. The sequence is that of Translation initiation factor 2 subunit gamma from Haloarcula marismortui (strain ATCC 43049 / DSM 3752 / JCM 8966 / VKM B-1809) (Halobacterium marismortui).